The following is a 37-amino-acid chain: uncharacterized protein (37 aa).

The signal sequence occupies residues 1–23; that stretch reads MLNFSLCLYPVFILNKLVLRTQS.

This sequence belongs to the orthopoxviruses VACWR204.5 protein family.

This is an uncharacterized protein from Vaccinia virus (strain Western Reserve) (VACV).